The following is a 178-amino-acid chain: Large ribosomal subunit protein bL35m (178 aa).

The protein belongs to the bacterial ribosomal protein bL35 family.

It localises to the mitochondrion. The polypeptide is Large ribosomal subunit protein bL35m (mRpL35) (Drosophila melanogaster (Fruit fly)).